We begin with the raw amino-acid sequence, 375 residues long: Ornithine transcarbamylase, chloroplastic (375 aa).

The transit peptide at 1-53 directs the protein to the chloroplast; sequence MAAAMASHVSTARSPALSFSSSSSSFFPGTTLRRFSAVSLPSPALPRLRVSCQ. N-acetylalanine is present on alanine 54. Carbamoyl phosphate-binding positions include 123–126, arginine 174, histidine 201, and glutamine 204; that span reads SMRT. L-ornithine is bound by residues asparagine 232, aspartate 293, serine 297, and methionine 298. Cysteine 333 (proton acceptor) is an active-site residue. Residues 333 to 334 and arginine 361 contribute to the carbamoyl phosphate site; that span reads CL.

This sequence belongs to the aspartate/ornithine carbamoyltransferase superfamily. OTCase family.

It localises to the plastid. It is found in the chloroplast. The enzyme catalyses carbamoyl phosphate + L-ornithine = L-citrulline + phosphate + H(+). This chain is Ornithine transcarbamylase, chloroplastic (OTC), found in Arabidopsis thaliana (Mouse-ear cress).